The primary structure comprises 565 residues: Periplasmic trehalase (565 aa).

The N-terminal stretch at 1–30 is a signal peptide; that stretch reads MKSPAPSRPQKMALIPACIFLCFAALSVQA. Residues Arg152, 159–160, Asn196, 205–207, 277–279, and Gly310 contribute to the substrate site; these read WD, RSQ, and RPE. Active-site proton donor/acceptor residues include Asp312 and Glu496. Glu511 contacts substrate. The interval 539-565 is disordered; that stretch reads CDNVPATRPLSESTTQPLKQKEAEPTP.

This sequence belongs to the glycosyl hydrolase 37 family. In terms of assembly, monomer.

The protein localises to the periplasm. It carries out the reaction alpha,alpha-trehalose + H2O = alpha-D-glucose + beta-D-glucose. Functionally, provides the cells with the ability to utilize trehalose at high osmolarity by splitting it into glucose molecules that can subsequently be taken up by the phosphotransferase-mediated uptake system. The protein is Periplasmic trehalase of Escherichia coli O45:K1 (strain S88 / ExPEC).